A 364-amino-acid chain; its full sequence is TD and POZ domain-containing protein 2 (364 aa).

Residues Glu-19–Val-149 enclose the MATH domain. Residues Thr-188–His-255 enclose the BTB domain.

The protein belongs to the Tdpoz family.

This chain is TD and POZ domain-containing protein 2, found in Mus musculus (Mouse).